The sequence spans 174 residues: Small ribosomal subunit protein uS5 (174 aa).

The S5 DRBM domain occupies 19–82 (LREKMVAINR…DEARRKLKKI (64 aa)).

Belongs to the universal ribosomal protein uS5 family. In terms of assembly, part of the 30S ribosomal subunit. Contacts proteins S4 and S8.

In terms of biological role, with S4 and S12 plays an important role in translational accuracy. Its function is as follows. Located at the back of the 30S subunit body where it stabilizes the conformation of the head with respect to the body. The chain is Small ribosomal subunit protein uS5 from Aromatoleum aromaticum (strain DSM 19018 / LMG 30748 / EbN1) (Azoarcus sp. (strain EbN1)).